The sequence spans 60 residues: Movement protein TGBp3 (60 aa).

Topologically, residues 1–6 (MHYIDW) are lumenal. A helical transmembrane segment spans residues 7 to 23 (VILLTFAAALIVCLTPK). The Cytoplasmic portion of the chain corresponds to 24-60 (PEPCIITVSGASATVSNCPNPELLTDLVKALKPAKPV).

The protein belongs to the Tymovirales TGBp3 protein family.

The protein resides in the host endoplasmic reticulum membrane. Its function is as follows. Plays a role in viral cell-to-cell propagation, by facilitating genome transport to neighboring plant cells through plasmosdesmata. May induce the formation of granular vesicles derived from the Endoplasmic reticulum, which align on actin filaments. The sequence is that of Movement protein TGBp3 from Citrus (ICRSV).